Consider the following 310-residue polypeptide: tRNA-cytidine(32) 2-sulfurtransferase (310 aa).

The PP-loop motif signature appears at 45–50 (SGGKDS). [4Fe-4S] cluster contacts are provided by Cys120, Cys123, and Cys211.

This sequence belongs to the TtcA family. In terms of assembly, homodimer. Mg(2+) is required as a cofactor. The cofactor is [4Fe-4S] cluster.

It is found in the cytoplasm. The catalysed reaction is cytidine(32) in tRNA + S-sulfanyl-L-cysteinyl-[cysteine desulfurase] + AH2 + ATP = 2-thiocytidine(32) in tRNA + L-cysteinyl-[cysteine desulfurase] + A + AMP + diphosphate + H(+). It functions in the pathway tRNA modification. Functionally, catalyzes the ATP-dependent 2-thiolation of cytidine in position 32 of tRNA, to form 2-thiocytidine (s(2)C32). The sulfur atoms are provided by the cysteine/cysteine desulfurase (IscS) system. The protein is tRNA-cytidine(32) 2-sulfurtransferase of Shewanella baltica (strain OS155 / ATCC BAA-1091).